Consider the following 224-residue polypeptide: Cytochrome c biogenesis ATP-binding export protein CcmA (224 aa).

The ABC transporter domain occupies 1-220 (MQNAEAAPAL…EYAHAEVVGA (220 aa)). ATP is bound at residue 40–47 (GANGSGKT).

The protein belongs to the ABC transporter superfamily. CcmA exporter (TC 3.A.1.107) family. The complex is composed of two ATP-binding proteins (CcmA) and two transmembrane proteins (CcmB).

It is found in the cell inner membrane. The catalysed reaction is heme b(in) + ATP + H2O = heme b(out) + ADP + phosphate + H(+). Part of the ABC transporter complex CcmAB involved in the biogenesis of c-type cytochromes; once thought to export heme, this seems not to be the case, but its exact role is uncertain. Responsible for energy coupling to the transport system. The sequence is that of Cytochrome c biogenesis ATP-binding export protein CcmA from Bordetella parapertussis (strain 12822 / ATCC BAA-587 / NCTC 13253).